The primary structure comprises 73 residues: MSSSFFKKRLSPIKPGDPIDYKDVDLLKKFITERGKILPRRLTGLTAKQQRDLTNAVKRARIVALLPFVNPEG.

It belongs to the bacterial ribosomal protein bS18 family. As to quaternary structure, part of the 30S ribosomal subunit. Forms a tight heterodimer with protein bS6.

Functionally, binds as a heterodimer with protein bS6 to the central domain of the 16S rRNA, where it helps stabilize the platform of the 30S subunit. The chain is Small ribosomal subunit protein bS18 from Synechococcus sp. (strain WH7803).